Here is a 798-residue protein sequence, read N- to C-terminus: Cold shock domain-containing protein E1 (798 aa).

A CSD 1 domain is found at glutamate 26–leucine 87. Lysine 81 carries the post-translational modification N6-acetyllysine. A Glycyl lysine isopeptide (Lys-Gly) (interchain with G-Cter in SUMO2) cross-link involves residue lysine 91. A Phosphoserine modification is found at serine 123. Positions valine 136–leucine 179 constitute a CSD 2; truncated domain. In terms of domain architecture, CSD 3 spans tyrosine 186–valine 245. Serine 276 carries the post-translational modification Phosphoserine. A CSD 4; truncated domain is found at leucine 297–leucine 337. CSD domains lie at glutamate 349–isoleucine 410 and asparagine 447–valine 507. The residue at position 514 (serine 514) is a Phosphoserine. The CSD 7 domain maps to leucine 519–valine 579. The residue at position 584 (serine 584) is a Phosphoserine. CSD domains are found at residues proline 610 to isoleucine 670 and arginine 674 to valine 735. The SUZ-C domain maps to proline 748 to arginine 789. The residue at position 761 (threonine 761) is a Phosphothreonine.

It belongs to the UNR family. As to quaternary structure, component of a multi subunit autoregulatory ribonucleoprotein complex (ARC), at least composed of IGF2BP1, PABPC1 and CSDE1. Interacts with STRAP. Part of a complex associated with the FOS mCRD domain and consisting of PABPC1, PAIP1, HNRPD and SYNCRIP. The interaction with PABPC1 is direct and RNA-independent. Interacts with EIF4ENIF1/4E-T.

The protein localises to the cytoplasm. The protein resides in the stress granule. It localises to the P-body. In terms of biological role, RNA-binding protein involved in translationally coupled mRNA turnover. Implicated with other RNA-binding proteins in the cytoplasmic deadenylation/translational and decay interplay of the FOS mRNA mediated by the major coding-region determinant of instability (mCRD) domain. Required for efficient formation of stress granules. The chain is Cold shock domain-containing protein E1 from Rattus norvegicus (Rat).